We begin with the raw amino-acid sequence, 393 residues long: 1-deoxy-D-xylulose 5-phosphate reductoisomerase (393 aa).

NADPH contacts are provided by threonine 10, glycine 11, serine 12, isoleucine 13, arginine 37, glutamine 38, and asparagine 124. Residue lysine 125 participates in 1-deoxy-D-xylulose 5-phosphate binding. Glutamate 126 serves as a coordination point for NADPH. Aspartate 150 lines the Mn(2+) pocket. The 1-deoxy-D-xylulose 5-phosphate site is built by serine 151, glutamate 152, serine 179, and histidine 202. Glutamate 152 is a Mn(2+) binding site. Residue glycine 208 participates in NADPH binding. Residues serine 215, asparagine 220, lysine 221, and glutamate 224 each coordinate 1-deoxy-D-xylulose 5-phosphate. Glutamate 224 serves as a coordination point for Mn(2+).

It belongs to the DXR family. Mg(2+) is required as a cofactor. The cofactor is Mn(2+).

It catalyses the reaction 2-C-methyl-D-erythritol 4-phosphate + NADP(+) = 1-deoxy-D-xylulose 5-phosphate + NADPH + H(+). It functions in the pathway isoprenoid biosynthesis; isopentenyl diphosphate biosynthesis via DXP pathway; isopentenyl diphosphate from 1-deoxy-D-xylulose 5-phosphate: step 1/6. Catalyzes the NADPH-dependent rearrangement and reduction of 1-deoxy-D-xylulose-5-phosphate (DXP) to 2-C-methyl-D-erythritol 4-phosphate (MEP). This Cupriavidus necator (strain ATCC 17699 / DSM 428 / KCTC 22496 / NCIMB 10442 / H16 / Stanier 337) (Ralstonia eutropha) protein is 1-deoxy-D-xylulose 5-phosphate reductoisomerase.